The chain runs to 212 residues: Cytidylate kinase (212 aa).

7–15 (GPAASGKGT) provides a ligand contact to ATP.

This sequence belongs to the cytidylate kinase family. Type 1 subfamily.

The protein resides in the cytoplasm. It catalyses the reaction CMP + ATP = CDP + ADP. It carries out the reaction dCMP + ATP = dCDP + ADP. The protein is Cytidylate kinase of Rhodopseudomonas palustris (strain BisB18).